Consider the following 110-residue polypeptide: Iron-sulfur cluster assembly protein CyaY (110 aa).

The protein belongs to the frataxin family.

Functionally, involved in iron-sulfur (Fe-S) cluster assembly. May act as a regulator of Fe-S biogenesis. The sequence is that of Iron-sulfur cluster assembly protein CyaY from Pseudomonas fluorescens (strain SBW25).